The primary structure comprises 354 residues: Hyaluronan and proteoglycan link protein 1 (354 aa).

Positions Met-1–Ala-15 are excised as a propeptide. Asn-21 and Asn-56 each carry an N-linked (GlcNAc...) asparagine glycan. The Ig-like V-type domain occupies Pro-38–Val-152. 5 cysteine pairs are disulfide-bonded: Cys-61-Cys-139, Cys-181-Cys-252, Cys-205-Cys-226, Cys-279-Cys-349, and Cys-304-Cys-325. Link domains lie at Val-159–Thr-254 and Gly-259–Arg-351.

This sequence belongs to the HAPLN family.

It is found in the secreted. The protein resides in the extracellular space. The protein localises to the extracellular matrix. Stabilizes the aggregates of proteoglycan monomers with hyaluronic acid in the extracellular cartilage matrix. The chain is Hyaluronan and proteoglycan link protein 1 (HAPLN1) from Bos taurus (Bovine).